The chain runs to 322 residues: Transcriptional activator protein Pur-alpha (322 aa).

A disordered region spans residues 1–55 (MADRDSGSEQGGAALGSGGSLGHPGSGSGSGGGGGGGGGGGGSGGGGGGAPGGLQ). Alanine 2 carries the post-translational modification N-acetylalanine. The segment covering 9 to 52 (EQGGAALGSGGSLGHPGSGSGSGGGGGGGGGGGGSGGGGGGAPG) has biased composition (gly residues). Residues 60–125 (ELASKRVDIQ…DFIEHYAQLG (66 aa)) form a PUR repeat I repeat. One copy of the PUR repeat II repeat lies at 142–213 (ALKSEFLVRE…KLIDDYGVEE (72 aa)). Serine 182 carries the phosphoserine modification. Residues 215–281 (PAELPEGTSL…CKYSEEMKKI (67 aa)) form a PUR repeat III repeat. Over residues 295–314 (LHQQQQQQQEETAAATLLLQ) the composition is skewed to low complexity. Positions 295-322 (LHQQQQQQQEETAAATLLLQGEEEGEED) are disordered.

Belongs to the PUR DNA-binding protein family. As to quaternary structure, homodimer, heterodimer with PURB and heterotrimer with PURB and YBX1/Y-box protein 1. Interacts with FMR1; this interaction occurs in association with polyribosome.

It is found in the nucleus. This is a probable transcription activator that specifically binds the purine-rich single strand of the PUR element located upstream of the MYC gene. May play a role in the initiation of DNA replication and in recombination. This chain is Transcriptional activator protein Pur-alpha (PURA), found in Homo sapiens (Human).